The following is a 365-amino-acid chain: Saoe class I histocompatibility antigen, C alpha chain (365 aa).

Residues 1–24 (MTIMAPRTLLLLLSGALSVTETWA) form the signal peptide. An alpha-1 region spans residues 25-114 (GSHSMRYFST…LLGYYNQSEA (90 aa)). The Extracellular segment spans residues 25–308 (GSHSMRYFST…EPPSQPTIPI (284 aa)). Asparagine 110 is a glycosylation site (N-linked (GlcNAc...) asparagine). An alpha-2 region spans residues 115–206 (GFHTIQWMYG…ENGKEMLQRA (92 aa)). 2 disulfides stabilise this stretch: cysteine 125/cysteine 188 and cysteine 227/cysteine 283. Positions 207–298 (EPPKTHVTHH…GLPEPFTLRW (92 aa)) are alpha-3. The 89-residue stretch at 209-297 (PKTHVTHHPV…EGLPEPFTLR (89 aa)) folds into the Ig-like C1-type domain. Residues 299-308 (EPPSQPTIPI) are connecting peptide. Residues 309–332 (MGIVAILAILGAVVTGAVVAAVMW) traverse the membrane as a helical segment. The Cytoplasmic portion of the chain corresponds to 333–365 (RKKSSDKKGGSYSQAARSDSAQGSDVSLTACKV). Residues 337–365 (SDKKGGSYSQAARSDSAQGSDVSLTACKV) are disordered. Residues 346–359 (QAARSDSAQGSDVS) show a composition bias toward polar residues. 2 positions are modified to phosphoserine: serine 356 and serine 359.

This sequence belongs to the MHC class I family. In terms of assembly, heterodimer of an alpha chain and a beta chain (beta-2-microglobulin).

It localises to the membrane. Its function is as follows. Involved in the presentation of foreign antigens to the immune system. In Saguinus oedipus (Cotton-top tamarin), this protein is Saoe class I histocompatibility antigen, C alpha chain.